The sequence spans 639 residues: Polypeptide N-acetylgalactosaminyltransferase 15 (639 aa).

Over 1–11 (MLLRKRYRHRP) the chain is Cytoplasmic. A helical; Signal-anchor for type II membrane protein transmembrane segment spans residues 12-34 (CRLQFLLLLLMLGCVLMMVAMLH). Over 35–639 (PPHHTLHQTV…FDQINAVDER (605 aa)) the chain is Lumenal. Residues 106-155 (RNQSQGRRGGSYRLIKQPRRQDKEAPKRDWGADEDGEVSEEEELTPFSLD) form a disordered region. A glycan (N-linked (GlcNAc...) asparagine) is linked at asparagine 107. Residues 124 to 136 (RRQDKEAPKRDWG) are compositionally biased toward basic and acidic residues. A compositionally biased stretch (acidic residues) spans 137–149 (ADEDGEVSEEEEL). 5 disulfide bridges follow: cysteine 181/cysteine 412, cysteine 403/cysteine 482, cysteine 517/cysteine 536, cysteine 562/cysteine 575, and cysteine 603/cysteine 620. The catalytic subdomain A stretch occupies residues 190–299 (LPTASVILCF…PGWLEPLLSR (110 aa)). Aspartate 231 and arginine 260 together coordinate substrate. Mn(2+) is bound by residues aspartate 283, histidine 285, and histidine 417. Residues 358-420 (PIRSPVVPGE…PCSRVGHIYQ (63 aa)) are catalytic subdomain B. Positions 504–631 (SFSGKLHNTG…GKARQQWRFD (128 aa)) constitute a Ricin B-type lectin domain. N-linked (GlcNAc...) asparagine glycosylation is present at asparagine 574.

Belongs to the glycosyltransferase 2 family. GalNAc-T subfamily. Mn(2+) is required as a cofactor. Widely expressed. Highly expressed in small intestine, placenta, spleen, cerebral cortex and ovary. Expressed at intermediate level in uterus, mammary gland, stomach, cerebellum and whole brain. Weakly expressed in fetal brain, bone marrow, thyroid gland, thymus, heart, skeletal muscle, lung, liver, colon, pancreas, kidney and testis. Not expressed in leukocyte. Expressed in both normal and osteoarthritic cartilage. Expressed at low level in chondrocytes in all zones of both normal and osteoarthritic cartilage.

The protein localises to the golgi apparatus membrane. It carries out the reaction L-seryl-[protein] + UDP-N-acetyl-alpha-D-galactosamine = a 3-O-[N-acetyl-alpha-D-galactosaminyl]-L-seryl-[protein] + UDP + H(+). It catalyses the reaction L-threonyl-[protein] + UDP-N-acetyl-alpha-D-galactosamine = a 3-O-[N-acetyl-alpha-D-galactosaminyl]-L-threonyl-[protein] + UDP + H(+). The protein operates within protein modification; protein glycosylation. Catalyzes the initial reaction in O-linked oligosaccharide biosynthesis, the transfer of an N-acetyl-D-galactosamine residue to a serine or threonine residue on the protein receptor. Although it displays a much weaker activity toward all substrates tested compared to GALNT2, it is able to transfer up to seven GalNAc residues to the Muc5AC peptide, suggesting that it can fill vicinal Thr/Ser residues in cooperation with other GALNT proteins. Prefers Muc1a as substrate. The chain is Polypeptide N-acetylgalactosaminyltransferase 15 (GALNT15) from Homo sapiens (Human).